The sequence spans 99 residues: Putative pterin-4-alpha-carbinolamine dehydratase (99 aa).

Belongs to the pterin-4-alpha-carbinolamine dehydratase family.

The catalysed reaction is (4aS,6R)-4a-hydroxy-L-erythro-5,6,7,8-tetrahydrobiopterin = (6R)-L-erythro-6,7-dihydrobiopterin + H2O. The sequence is that of Putative pterin-4-alpha-carbinolamine dehydratase from Bradyrhizobium sp. (strain BTAi1 / ATCC BAA-1182).